Here is a 144-residue protein sequence, read N- to C-terminus: Large ribosomal subunit protein uL15 (144 aa).

A disordered region spans residues 1–49 (MRLNTLSPAAGSKSAPKRVGRGIGSGLGKTAGRGHKGQKSRSGGGVRVG). A compositionally biased stretch (gly residues) spans 21 to 31 (RGIGSGLGKTA).

This sequence belongs to the universal ribosomal protein uL15 family. Part of the 50S ribosomal subunit.

Binds to the 23S rRNA. This Shewanella frigidimarina (strain NCIMB 400) protein is Large ribosomal subunit protein uL15.